Here is a 548-residue protein sequence, read N- to C-terminus: ComP-specific O-oligosaccharyltransferase (548 aa).

A run of 12 helical transmembrane segments spans residues 8–28, 32–52, 68–88, 91–111, 119–139, 164–184, 189–209, 213–233, 239–259, 331–351, 363–383, and 418–438; these read IKNY…IIPN, LSST…LLTV, WFLF…IYFF, FFFS…GFNE, IVKK…LIAI, LGQP…LCYL, SLNN…NVMT, SAWI…QKKI, IFFN…FNLI, MLWN…CFLI, LFLF…YPFA, and TLFL…VLDI.

The protein belongs to the PglL O-oligosaccharyltransferase family.

The protein localises to the cell membrane. In terms of biological role, specifically catalyzes the glycosylation of the pilin-like competence factor ComP. The protein is ComP-specific O-oligosaccharyltransferase of Acinetobacter baylyi (strain ATCC 33305 / BD413 / ADP1).